We begin with the raw amino-acid sequence, 693 residues long: Heat shock protein homolog SSE1 (693 aa).

Position 2 is an N-acetylserine (Ser-2). Lys-195 is covalently cross-linked (Glycyl lysine isopeptide (Lys-Gly) (interchain with G-Cter in ubiquitin)). At Thr-242 the chain carries Phosphothreonine. The disordered stretch occupies residues 653–693 (IRSKQEASQMAAMAEKLAAQRKAEAEKKEEKKDTEGDVDMD). Position 660 is a phosphoserine (Ser-660). Residues 673–687 (RKAEAEKKEEKKDTE) show a composition bias toward basic and acidic residues.

It belongs to the heat shock protein 70 family.

Its subcellular location is the cytoplasm. Its function is as follows. Has a calcium-dependent calmodulin-binding activity. Required for normal growth at various temperatures. The sequence is that of Heat shock protein homolog SSE1 (SSE1) from Saccharomyces cerevisiae (strain ATCC 204508 / S288c) (Baker's yeast).